The sequence spans 79 residues: MDFTKKILVVFAFTIMLGISSVHCRPSFKPIPLFGEKLTQCFDTRPCLQGMLKCIEFCSSMGTADGQCNNENLCCCTHE.

Positions Met-1–Cys-24 are cleaved as a signal peptide. 4 disulfides stabilise this stretch: Cys-41/Cys-76, Cys-47/Cys-68, Cys-54/Cys-74, and Cys-58/Cys-75.

The protein belongs to the DEFL family.

It is found in the secreted. The sequence is that of Defensin-like protein 109 from Arabidopsis thaliana (Mouse-ear cress).